Consider the following 763-residue polypeptide: 5-methyltetrahydropteroyltriglutamate--homocysteine methyltransferase (763 aa).

5-methyltetrahydropteroyltri-L-glutamate is bound by residues 16 to 19 (RELK) and Lys-117. L-homocysteine-binding positions include 440-442 (IGS) and Glu-493. Residues 440 to 442 (IGS) and Glu-493 each bind L-methionine. 5-methyltetrahydropteroyltri-L-glutamate is bound by residues 524 to 525 (RC) and Trp-570. Asp-608 lines the L-homocysteine pocket. Asp-608 lines the L-methionine pocket. Glu-614 contacts 5-methyltetrahydropteroyltri-L-glutamate. 3 residues coordinate Zn(2+): His-650, Cys-652, and Glu-674. His-703 functions as the Proton donor in the catalytic mechanism. Cys-735 contributes to the Zn(2+) binding site.

The protein belongs to the vitamin-B12 independent methionine synthase family. Zn(2+) is required as a cofactor.

The enzyme catalyses 5-methyltetrahydropteroyltri-L-glutamate + L-homocysteine = tetrahydropteroyltri-L-glutamate + L-methionine. The protein operates within amino-acid biosynthesis; L-methionine biosynthesis via de novo pathway; L-methionine from L-homocysteine (MetE route): step 1/1. Its function is as follows. Catalyzes the transfer of a methyl group from 5-methyltetrahydrofolate to homocysteine resulting in methionine formation. The chain is 5-methyltetrahydropteroyltriglutamate--homocysteine methyltransferase from Alcanivorax borkumensis (strain ATCC 700651 / DSM 11573 / NCIMB 13689 / SK2).